The chain runs to 114 residues: Iron-sulfur cluster insertion protein ErpA (114 aa).

The iron-sulfur cluster site is built by Cys-42, Cys-106, and Cys-108.

The protein belongs to the HesB/IscA family. In terms of assembly, homodimer. It depends on iron-sulfur cluster as a cofactor.

Required for insertion of 4Fe-4S clusters for at least IspG. The chain is Iron-sulfur cluster insertion protein ErpA from Proteus mirabilis (strain HI4320).